The following is a 156-amino-acid chain: Small ribosomal subunit protein uS7 (156 aa).

Belongs to the universal ribosomal protein uS7 family. In terms of assembly, part of the 30S ribosomal subunit. Contacts proteins S9 and S11.

Functionally, one of the primary rRNA binding proteins, it binds directly to 16S rRNA where it nucleates assembly of the head domain of the 30S subunit. Is located at the subunit interface close to the decoding center, probably blocks exit of the E-site tRNA. The protein is Small ribosomal subunit protein uS7 of Mycobacterium avium (strain 104).